We begin with the raw amino-acid sequence, 63 residues long: Large ribosomal subunit protein uL29 (63 aa).

Belongs to the universal ribosomal protein uL29 family.

The polypeptide is Large ribosomal subunit protein uL29 (Actinobacillus pleuropneumoniae serotype 5b (strain L20)).